The following is a 434-amino-acid chain: Nicotinate phosphoribosyltransferase (434 aa).

His-242 carries the phosphohistidine; by autocatalysis modification.

The protein belongs to the NAPRTase family. In terms of processing, transiently phosphorylated on a His residue during the reaction cycle. Phosphorylation strongly increases the affinity for substrates and increases the rate of nicotinate D-ribonucleotide production. Dephosphorylation regenerates the low-affinity form of the enzyme, leading to product release.

The catalysed reaction is nicotinate + 5-phospho-alpha-D-ribose 1-diphosphate + ATP + H2O = nicotinate beta-D-ribonucleotide + ADP + phosphate + diphosphate. It functions in the pathway cofactor biosynthesis; NAD(+) biosynthesis; nicotinate D-ribonucleotide from nicotinate: step 1/1. In terms of biological role, catalyzes the synthesis of beta-nicotinate D-ribonucleotide from nicotinate and 5-phospho-D-ribose 1-phosphate at the expense of ATP. This is Nicotinate phosphoribosyltransferase from Rhizobium etli (strain CIAT 652).